A 414-amino-acid polypeptide reads, in one-letter code: 3-phosphoshikimate 1-carboxyvinyltransferase (414 aa).

Positions 20, 21, and 25 each coordinate 3-phosphoshikimate. Residue lysine 20 participates in phosphoenolpyruvate binding. The phosphoenolpyruvate site is built by glycine 88 and arginine 116. Residues threonine 157, serine 158, glutamine 159, serine 183, aspartate 297, and lysine 324 each contribute to the 3-phosphoshikimate site. Glutamine 159 is a phosphoenolpyruvate binding site. Aspartate 297 serves as the catalytic Proton acceptor. Residues arginine 328, arginine 369, and lysine 395 each contribute to the phosphoenolpyruvate site.

It belongs to the EPSP synthase family. In terms of assembly, monomer.

The protein localises to the cytoplasm. It catalyses the reaction 3-phosphoshikimate + phosphoenolpyruvate = 5-O-(1-carboxyvinyl)-3-phosphoshikimate + phosphate. It participates in metabolic intermediate biosynthesis; chorismate biosynthesis. Catalyzes the transfer of the enolpyruvyl moiety of phosphoenolpyruvate (PEP) to the 5-hydroxyl of shikimate-3-phosphate (S3P) to produce enolpyruvyl shikimate-3-phosphate and inorganic phosphate. The polypeptide is 3-phosphoshikimate 1-carboxyvinyltransferase (Caldivirga maquilingensis (strain ATCC 700844 / DSM 13496 / JCM 10307 / IC-167)).